Consider the following 294-residue polypeptide: Cyclin-G1 (294 aa).

The protein belongs to the cyclin family. Cyclin G subfamily. Binds to B' regulatory B subunits of protein phosphatase A (PP2A) following induction by p53 (in vitro). In terms of tissue distribution, highest levels in kidney, heart and skeletal muscle.

The protein resides in the nucleus. Functionally, may play a role in growth regulation. Is associated with G2/M phase arrest in response to DNA damage. May be an intermediate by which p53 mediates its role as an inhibitor of cellular proliferation. This chain is Cyclin-G1 (Ccng1), found in Mus musculus (Mouse).